A 445-amino-acid chain; its full sequence is Phosphoglucosamine mutase (445 aa).

The Phosphoserine intermediate role is filled by serine 102. Residues serine 102, aspartate 241, aspartate 243, and aspartate 245 each contribute to the Mg(2+) site. Phosphoserine is present on serine 102.

Belongs to the phosphohexose mutase family. It depends on Mg(2+) as a cofactor. Activated by phosphorylation.

The catalysed reaction is alpha-D-glucosamine 1-phosphate = D-glucosamine 6-phosphate. Catalyzes the conversion of glucosamine-6-phosphate to glucosamine-1-phosphate. This chain is Phosphoglucosamine mutase, found in Citrobacter koseri (strain ATCC BAA-895 / CDC 4225-83 / SGSC4696).